We begin with the raw amino-acid sequence, 488 residues long: Glutamate--tRNA ligase (488 aa).

Positions 16-26 (PSPTGEPHVGT) match the 'HIGH' region motif. A 'KMSKS' region motif is present at residues 257-261 (KLSKR). Lys-260 contributes to the ATP binding site.

The protein belongs to the class-I aminoacyl-tRNA synthetase family. Glutamate--tRNA ligase type 1 subfamily. Monomer.

The protein resides in the cytoplasm. It catalyses the reaction tRNA(Glu) + L-glutamate + ATP = L-glutamyl-tRNA(Glu) + AMP + diphosphate. Catalyzes the attachment of glutamate to tRNA(Glu) in a two-step reaction: glutamate is first activated by ATP to form Glu-AMP and then transferred to the acceptor end of tRNA(Glu). The protein is Glutamate--tRNA ligase of Rhizobium etli (strain ATCC 51251 / DSM 11541 / JCM 21823 / NBRC 15573 / CFN 42).